Consider the following 312-residue polypeptide: Serine/threonine-protein kinase ppk11 (312 aa).

The region spanning 6–258 is the Protein kinase domain; the sequence is YRDLQLIGQG…AEYLSKHKFI (253 aa). Residues 12-20 and Lys-35 contribute to the ATP site; that span reads IGQGSFGSV. Asp-127 functions as the Proton acceptor in the catalytic mechanism.

It belongs to the protein kinase superfamily. Ser/Thr protein kinase family.

It is found in the cytoplasm. It localises to the nucleus. The catalysed reaction is L-seryl-[protein] + ATP = O-phospho-L-seryl-[protein] + ADP + H(+). It carries out the reaction L-threonyl-[protein] + ATP = O-phospho-L-threonyl-[protein] + ADP + H(+). The chain is Serine/threonine-protein kinase ppk11 (ppk11) from Schizosaccharomyces pombe (strain 972 / ATCC 24843) (Fission yeast).